Consider the following 204-residue polypeptide: Gellan lyase (204 aa).

As to quaternary structure, multimer.

Its subcellular location is the secreted. It carries out the reaction Eliminative cleavage of beta-D-glucopyranosyl-(1-&gt;4)-beta-D-glucopyranosyluronate bonds of gellan backbone releasing tetrasaccharides containing a 4-deoxy-4,5-unsaturated D-glucopyranosyluronic acid at the non-reducing end. The tetrasaccharide produced from deacetylated gellan is beta-D-4-deoxy-Delta(4)-GlcAp-(1-&gt;4)-beta-D-Glcp-(1-&gt;4)-alpha-L-Rhap-(1-&gt;3)-beta-D-Glcp.. Activity is stimulated by zinc, potassium, lithium, cobalt, sodium, calcium, iron, manganase, magnesium and mercury ions at a concentration of 1 mM, but inhibited by copper ions at a concentration of 1 mM. Activity is inhibited by potassium, sodium and magnesium ions at a concentration of 1 M. Activity is inhibited by urea, EDTA, dithiothreitol, p-CMB, PSF, natrium lauryl sulfate and N-bromosuccinimide. Functionally, cleaves the glycosidic bonds of gellan backbone and releases tetrasaccharide units of glucuronyl-glucosyl-rhamnosyl-glucose with unsaturated glucuronic acid at the non-reducing terminal. The enzyme is highly specific to the heteropolysaccharide gellan. The sequence is that of Gellan lyase from Geobacillus stearothermophilus (Bacillus stearothermophilus).